We begin with the raw amino-acid sequence, 143 residues long: 3-hydroxyacyl-[acyl-carrier-protein] dehydratase FabZ (143 aa).

His-47 is an active-site residue.

Belongs to the thioester dehydratase family. FabZ subfamily.

The protein resides in the cytoplasm. It catalyses the reaction a (3R)-hydroxyacyl-[ACP] = a (2E)-enoyl-[ACP] + H2O. Its function is as follows. Involved in unsaturated fatty acids biosynthesis. Catalyzes the dehydration of short chain beta-hydroxyacyl-ACPs and long chain saturated and unsaturated beta-hydroxyacyl-ACPs. The polypeptide is 3-hydroxyacyl-[acyl-carrier-protein] dehydratase FabZ (Rickettsia canadensis (strain McKiel)).